Consider the following 434-residue polypeptide: Histidinol dehydrogenase (434 aa).

Residues Tyr130, Gln188, and Asn211 each coordinate NAD(+). 3 residues coordinate substrate: Ser237, Gln259, and His262. 2 residues coordinate Zn(2+): Gln259 and His262. Catalysis depends on proton acceptor residues Glu326 and His327. Substrate-binding residues include His327, Asp360, Glu414, and His419. Asp360 contributes to the Zn(2+) binding site. His419 lines the Zn(2+) pocket.

It belongs to the histidinol dehydrogenase family. In terms of assembly, homodimer. Requires Zn(2+) as cofactor.

It catalyses the reaction L-histidinol + 2 NAD(+) + H2O = L-histidine + 2 NADH + 3 H(+). It functions in the pathway amino-acid biosynthesis; L-histidine biosynthesis; L-histidine from 5-phospho-alpha-D-ribose 1-diphosphate: step 9/9. Its function is as follows. Catalyzes the sequential NAD-dependent oxidations of L-histidinol to L-histidinaldehyde and then to L-histidine. This chain is Histidinol dehydrogenase, found in Shigella sonnei (strain Ss046).